The sequence spans 2543 residues: Zinc finger FYVE domain-containing protein 26 (2543 aa).

Phosphoserine is present on Ser-297. 4 disordered regions span residues 523 to 545 (ECRDSPSEDPALAAEPANDSLSS), 609 to 636 (GLLGLRSPSESPQHIAQPERKSEQGCQE), 699 to 722 (LSSHSPPEKPKLPEGQSCSGSRDG), and 744 to 820 (VTSN…GRLQ). 3 positions are modified to phosphoserine: Ser-615, Ser-619, and Ser-703. Basic and acidic residues predominate over residues 699 to 710 (LSSHSPPEKPKL). Positions 767 to 776 (SLRRGRRTRR) are enriched in basic residues. Over residues 786 to 806 (SNPSLESTSSELSTSTSEGSL) the composition is skewed to low complexity. A Phosphoserine modification is found at Ser-802. Positions 870–897 (MFMERYQEVIQELSRVEHKIENQNSDGG) form a coiled coil. Residues 1272–1299 (LSTLSSPKPTGNSTLERKPHSSPRDSSL) are disordered. Residues 1273–1285 (STLSSPKPTGNST) show a composition bias toward polar residues. A phosphoserine mark is found at Ser-1744, Ser-1765, Ser-1784, and Ser-1786. The segment at 1780–1812 (STIHSPSPRERSFPESQPPPEFVPPATPPGRPQ) is disordered. The segment covering 1795 to 1810 (SQPPPEFVPPATPPGR) has biased composition (pro residues). An FYVE-type zinc finger spans residues 1816-1876 (DESASICMVC…VCDQCYSYYN (61 aa)). Zn(2+) contacts are provided by Cys-1822, Cys-1825, Cys-1839, Cys-1842, Cys-1847, Cys-1850, Cys-1868, and Cys-1871.

It belongs to the ZFYVE26 family. Interacts with AP5Z1, AP5B1, AP5S1 and SPG11. Interacts with TTC19 and KIF13A.

The protein localises to the cytoplasm. It is found in the cytoskeleton. The protein resides in the microtubule organizing center. It localises to the centrosome. Its subcellular location is the midbody. Phosphatidylinositol 3-phosphate-binding protein required for the abscission step in cytokinesis: recruited to the midbody during cytokinesis and acts as a regulator of abscission. May also be required for efficient homologous recombination DNA double-strand break repair. The polypeptide is Zinc finger FYVE domain-containing protein 26 (ZFYVE26) (Ailuropoda melanoleuca (Giant panda)).